Reading from the N-terminus, the 157-residue chain is Protein TIFY 8 (157 aa).

The region spanning 33-68 (VPGTTEQLTIFYSGSMVKFDNVPREKIRYACRLRRL) is the Tify domain. Residues 126–147 (SIGAQRTGTPPSRRRIHARGKS) form a disordered region. Over residues 137–147 (SRRRIHARGKS) the composition is skewed to basic residues.

The protein belongs to the TIFY/JAZ family. In terms of processing, ubiquitinated. Targeted for degradation by the SCF(COI1) E3 ubiquitin ligase-proteasome pathway during jasmonate signaling.

In terms of biological role, repressor of jasmonate responses. In Oryza sativa subsp. japonica (Rice), this protein is Protein TIFY 8.